The following is a 231-amino-acid chain: PIAGSMVLAAILLKLGGYGMIRIIQILPSSKTDMFIPFITLSLWGAVLANLTCLQQTDLKSLIAYSSISHMGLVVAAISIQTQWSLSGAMALMIAHGFTSSALFCLANTSYERTHTRILILTRGFHNILPMTTTWWLLSNLMNIATPPMMNFTSEFLILSSLFNWCPTTIILLSLSILITSIYSLHIFLSTQMGPTLLNTQTEPAHSREHLLMTLHIIPLILLSMKPELVM.

Transmembrane regions (helical) follow at residues 1 to 21 (PIAG…YGMI), 34 to 54 (MFIP…LTCL), 62 to 82 (LIAY…SIQT), 86 to 106 (LSGA…LFCL), 118 to 138 (ILIL…WWLL), 169 to 189 (TIIL…HIFL), and 211 to 231 (LLMT…ELVM).

This sequence belongs to the complex I subunit 4 family.

Its subcellular location is the mitochondrion membrane. It carries out the reaction a ubiquinone + NADH + 5 H(+)(in) = a ubiquinol + NAD(+) + 4 H(+)(out). In terms of biological role, core subunit of the mitochondrial membrane respiratory chain NADH dehydrogenase (Complex I) that is believed to belong to the minimal assembly required for catalysis. Complex I functions in the transfer of electrons from NADH to the respiratory chain. The immediate electron acceptor for the enzyme is believed to be ubiquinone. This chain is NADH-ubiquinone oxidoreductase chain 4 (MT-ND4), found in Causus rhombeatus (Rhombic night adder).